The primary structure comprises 272 residues: Probable proteasome subunit beta type-5 (272 aa).

The propeptide at 1–61 (MNSIVSKYTQ…KHCLIKMNHG (61 aa)) is removed in mature form. The active-site Nucleophile is the T62.

This sequence belongs to the peptidase T1B family. The 26S proteasome consists of a 20S proteasome core and two 19S regulatory subunits. The 20S proteasome core is composed of 28 subunits that are arranged in four stacked rings, resulting in a barrel-shaped structure. The two end rings are each formed by seven alpha subunits, and the two central rings are each formed by seven beta subunits. The catalytic chamber with the active sites is on the inside of the barrel.

The protein resides in the cytoplasm. It is found in the nucleus. It catalyses the reaction Cleavage of peptide bonds with very broad specificity.. The proteasome is a multicatalytic proteinase complex which is characterized by its ability to cleave peptides with Arg, Phe, Tyr, Leu, and Glu adjacent to the leaving group at neutral or slightly basic pH. The proteasome has an ATP-dependent proteolytic activity. This chain is Probable proteasome subunit beta type-5 (pts1), found in Schizosaccharomyces pombe (strain 972 / ATCC 24843) (Fission yeast).